The primary structure comprises 164 residues: UPF0478 protein SSP1024 (164 aa).

Residues isoleucine 7–leucine 27 form a helical membrane-spanning segment. Residues arginine 136–lysine 164 are disordered. Residues asparagine 143–lysine 164 show a composition bias toward polar residues.

It belongs to the UPF0478 family.

It localises to the cell membrane. This is UPF0478 protein SSP1024 from Staphylococcus saprophyticus subsp. saprophyticus (strain ATCC 15305 / DSM 20229 / NCIMB 8711 / NCTC 7292 / S-41).